We begin with the raw amino-acid sequence, 78 residues long: Large ribosomal subunit protein bL28 (78 aa).

Residues 1 to 20 form a disordered region; that stretch reads MSRVCQVTGKRPVTGNNRSH.

Belongs to the bacterial ribosomal protein bL28 family.

This chain is Large ribosomal subunit protein bL28, found in Vibrio campbellii (strain ATCC BAA-1116).